The chain runs to 131 residues: Small ribosomal subunit protein uS11 (131 aa).

The protein belongs to the universal ribosomal protein uS11 family. In terms of assembly, part of the 30S ribosomal subunit. Interacts with proteins S7 and S18. Binds to IF-3.

Its function is as follows. Located on the platform of the 30S subunit, it bridges several disparate RNA helices of the 16S rRNA. Forms part of the Shine-Dalgarno cleft in the 70S ribosome. This chain is Small ribosomal subunit protein uS11, found in Granulibacter bethesdensis (strain ATCC BAA-1260 / CGDNIH1).